A 346-amino-acid polypeptide reads, in one-letter code: Small ribosomal subunit biogenesis GTPase RsgA 1 (346 aa).

In terms of domain architecture, CP-type G spans 93–248 (EEQLIAANFD…IIDTPGMREF (156 aa)). Residues 138–141 (TKAD) and 190–198 (GSSGVGKSS) contribute to the GTP site. 4 residues coordinate Zn(2+): C271, C276, H278, and C284.

It belongs to the TRAFAC class YlqF/YawG GTPase family. RsgA subfamily. As to quaternary structure, monomer. Associates with 30S ribosomal subunit, binds 16S rRNA. Zn(2+) is required as a cofactor.

The protein localises to the cytoplasm. Functionally, one of several proteins that assist in the late maturation steps of the functional core of the 30S ribosomal subunit. Helps release RbfA from mature subunits. May play a role in the assembly of ribosomal proteins into the subunit. Circularly permuted GTPase that catalyzes slow GTP hydrolysis, GTPase activity is stimulated by the 30S ribosomal subunit. This Listeria innocua serovar 6a (strain ATCC BAA-680 / CLIP 11262) protein is Small ribosomal subunit biogenesis GTPase RsgA 1.